The sequence spans 369 residues: Maltose/maltodextrin import ATP-binding protein MalK (369 aa).

Residues 4–234 (VQLRNVTKAW…PADRFVAGFI (231 aa)) form the ABC transporter domain. ATP is bound at residue 36–43 (GPSGCGKS).

It belongs to the ABC transporter superfamily. Maltooligosaccharide importer (TC 3.A.1.1.1) family. In terms of assembly, the complex is composed of two ATP-binding proteins (MalK), two transmembrane proteins (MalG and MalK) and a solute-binding protein (MalE).

It is found in the cell inner membrane. It carries out the reaction D-maltose(out) + ATP + H2O = D-maltose(in) + ADP + phosphate + H(+). In terms of biological role, part of the ABC transporter complex MalEFGK involved in maltose/maltodextrin import. Responsible for energy coupling to the transport system. The chain is Maltose/maltodextrin import ATP-binding protein MalK from Salmonella paratyphi A (strain ATCC 9150 / SARB42).